A 193-amino-acid polypeptide reads, in one-letter code: Ectoine TRAP transporter small permease protein TeaB (193 aa).

The next 4 membrane-spanning stretches (helical) occupy residues 33 to 55 (ILAL…RFAL), 65 to 82 (VNRI…GYAA), 103 to 125 (RALM…YYSV), and 145 to 167 (IFII…LFTA).

This sequence belongs to the TRAP transporter small permease family. In terms of assembly, the complex comprises the extracytoplasmic solute receptor protein TeaA, and the two transmembrane proteins TeaB and TeaC.

It is found in the cell inner membrane. Its function is as follows. Part of the tripartite ATP-independent periplasmic (TRAP) transport system TeaABC involved in the uptake of ectoine and hydroxyectoine in response to osmotic upshock. Probably functions as a recovery system for synthesized ectoine that leaks out of the cell. This is Ectoine TRAP transporter small permease protein TeaB (teaB) from Halomonas elongata (strain ATCC 33173 / DSM 2581 / NBRC 15536 / NCIMB 2198 / 1H9).